We begin with the raw amino-acid sequence, 198 residues long: NADH-quinone oxidoreductase subunit C (198 aa).

It belongs to the complex I 30 kDa subunit family. NDH-1 is composed of 14 different subunits. Subunits NuoB, C, D, E, F, and G constitute the peripheral sector of the complex.

Its subcellular location is the cell inner membrane. The catalysed reaction is a quinone + NADH + 5 H(+)(in) = a quinol + NAD(+) + 4 H(+)(out). Functionally, NDH-1 shuttles electrons from NADH, via FMN and iron-sulfur (Fe-S) centers, to quinones in the respiratory chain. The immediate electron acceptor for the enzyme in this species is believed to be ubiquinone. Couples the redox reaction to proton translocation (for every two electrons transferred, four hydrogen ions are translocated across the cytoplasmic membrane), and thus conserves the redox energy in a proton gradient. This is NADH-quinone oxidoreductase subunit C from Janthinobacterium sp. (strain Marseille) (Minibacterium massiliensis).